A 326-amino-acid polypeptide reads, in one-letter code: Fructose-1,6-bisphosphatase class 1 (326 aa).

Mg(2+) contacts are provided by Glu90, Asp111, Leu113, and Asp114. Substrate is bound by residues Asp114–Ser117, Tyr222, and Lys253. Glu259 contacts Mg(2+).

It belongs to the FBPase class 1 family. In terms of assembly, homotetramer. The cofactor is Mg(2+).

Its subcellular location is the cytoplasm. The enzyme catalyses beta-D-fructose 1,6-bisphosphate + H2O = beta-D-fructose 6-phosphate + phosphate. The protein operates within carbohydrate biosynthesis; gluconeogenesis. The polypeptide is Fructose-1,6-bisphosphatase class 1 (Citrifermentans bemidjiense (strain ATCC BAA-1014 / DSM 16622 / JCM 12645 / Bem) (Geobacter bemidjiensis)).